The primary structure comprises 631 residues: Dolichyl-diphosphooligosaccharide--protein glycosyltransferase subunit 2 (631 aa).

An N-terminal signal peptide occupies residues 1–22 (MAPPGSSAVFLLALTITASVQA). Over 23–540 (LTPTHYLTKQ…REPEKRPPTV (518 aa)) the chain is Lumenal. An N-linked (GlcNAc...) asparagine glycan is attached at Asn-106. Lys-154 participates in a covalent cross-link: Glycyl lysine isopeptide (Lys-Gly) (interchain with G-Cter in ubiquitin). Residues 541 to 561 (VSNTFTALILSPLLLLFALWI) form a helical membrane-spanning segment. Topologically, residues 562–571 (RIGANVSNFT) are cytoplasmic. A helical membrane pass occupies residues 572 to 592 (FAPSTVIFHLGHAAMLGLMYI). At 593–596 (YWTQ) the chain is on the lumenal side. A helical transmembrane segment spans residues 597-617 (LNMFQTLKYLAVLGTVTFLAG). Residues 618 to 631 (NRMLAQHAVKRTAH) are Cytoplasmic-facing.

This sequence belongs to the SWP1 family. As to quaternary structure, component of the oligosaccharyltransferase (OST) complex. OST exists in two different complex forms which contain common core subunits RPN1, RPN2, OST48, OST4, DAD1 and TMEM258, either STT3A or STT3B as catalytic subunits, and form-specific accessory subunits. STT3A complex assembly occurs through the formation of 3 subcomplexes. Subcomplex 1 contains RPN1 and TMEM258, subcomplex 2 contains the STT3A-specific subunits STT3A, DC2/OSTC, and KCP2 as well as the core subunit OST4, and subcomplex 3 contains RPN2, DAD1, and OST48. The STT3A complex can form stable complexes with the Sec61 complex or with both the Sec61 and TRAP complexes. Interacts with DDI2. Interacts with TMEM35A/NACHO.

Its subcellular location is the endoplasmic reticulum. The protein localises to the endoplasmic reticulum membrane. It functions in the pathway protein modification; protein glycosylation. In terms of biological role, subunit of the oligosaccharyl transferase (OST) complex that catalyzes the initial transfer of a defined glycan (Glc(3)Man(9)GlcNAc(2) in eukaryotes) from the lipid carrier dolichol-pyrophosphate to an asparagine residue within an Asn-X-Ser/Thr consensus motif in nascent polypeptide chains, the first step in protein N-glycosylation. N-glycosylation occurs cotranslationally and the complex associates with the Sec61 complex at the channel-forming translocon complex that mediates protein translocation across the endoplasmic reticulum (ER). All subunits are required for a maximal enzyme activity. The chain is Dolichyl-diphosphooligosaccharide--protein glycosyltransferase subunit 2 from Mus musculus (Mouse).